The following is a 206-amino-acid chain: Phosphatidyl-N-methylethanolamine N-methyltransferase (206 aa).

At Met1–Ser20 the chain is on the lumenal side. An intramembrane region (helical) is located at residues Ser21–Ala41. Over Arg42 to Met53 the chain is Lumenal. The helical transmembrane segment at Cys54 to Val74 threads the bilayer. Residues Arg75 to Gly101 lie on the Cytoplasmic side of the membrane. Residues Val102 to Thr122 form a helical membrane-spanning segment. Position 106-108 (Gly106–Gly108) interacts with S-adenosyl-L-methionine. The Lumenal portion of the chain corresponds to Gly123–Lys165. A helical membrane pass occupies residues Gly166–Arg186. At Trp187–Met206 the chain is on the cytoplasmic side. Glu188 to Glu189 contributes to the S-adenosyl-L-methionine binding site.

Belongs to the class VI-like SAM-binding methyltransferase superfamily. PEMT/PEM2 methyltransferase family.

It is found in the endoplasmic reticulum membrane. It localises to the mitochondrion membrane. It catalyses the reaction a 1,2-diacyl-sn-glycero-3-phosphoethanolamine + S-adenosyl-L-methionine = a 1,2-diacyl-sn-glycero-3-phospho-N-methylethanolamine + S-adenosyl-L-homocysteine + H(+). It carries out the reaction a 1,2-diacyl-sn-glycero-3-phospho-N-methylethanolamine + S-adenosyl-L-methionine = a 1,2-diacyl-sn-glycero-3-phospho-N,N-dimethylethanolamine + S-adenosyl-L-homocysteine + H(+). The catalysed reaction is a 1,2-diacyl-sn-glycero-3-phospho-N,N-dimethylethanolamine + S-adenosyl-L-methionine = a 1,2-diacyl-sn-glycero-3-phosphocholine + S-adenosyl-L-homocysteine + H(+). It participates in phospholipid metabolism; phosphatidylcholine biosynthesis. Its function is as follows. Catalyzes the second two steps of the methylation pathway of phosphatidylcholine biosynthesis, the SAM-dependent methylation of phosphatidylmonomethylethanolamine (PMME) to phosphatidyldimethylethanolamine (PDME) and of PDME to phosphatidylcholine (PC). Can also catalyze the first methylation reaction of PE to PMME in the absence of PE methyltransferase CHO2. This is Phosphatidyl-N-methylethanolamine N-methyltransferase from Saccharomyces cerevisiae (strain ATCC 204508 / S288c) (Baker's yeast).